Consider the following 165-residue polypeptide: C-phycoerythrin class 2 subunit alpha (165 aa).

A phycourobilin-binding site is contributed by C75. 2 residues coordinate (2R,3E)-phycoerythrobilin: C83 and C140.

Belongs to the phycobiliprotein family. In terms of assembly, heterodimer of an alpha and a beta chain. Contains two covalently linked phycoerythrobilin chromophores and one covalently linked phycourobilin chromophore.

The protein resides in the cellular thylakoid membrane. Its function is as follows. Light-harvesting photosynthetic bile pigment-protein from the phycobiliprotein complex. In Synechococcus sp. (strain WH8020), this protein is C-phycoerythrin class 2 subunit alpha (mpeA).